We begin with the raw amino-acid sequence, 74 residues long: ATP synthase subunit c (74 aa).

2 helical membrane-spanning segments follow: residues 8 to 28 (FIGI…VSNI) and 52 to 72 (IGAG…MLLI).

It belongs to the ATPase C chain family. F-type ATPases have 2 components, F(1) - the catalytic core - and F(0) - the membrane proton channel. F(1) has five subunits: alpha(3), beta(3), gamma(1), delta(1), epsilon(1). F(0) has three main subunits: a(1), b(2) and c(10-14). The alpha and beta chains form an alternating ring which encloses part of the gamma chain. F(1) is attached to F(0) by a central stalk formed by the gamma and epsilon chains, while a peripheral stalk is formed by the delta and b chains.

The protein localises to the cell inner membrane. Its function is as follows. F(1)F(0) ATP synthase produces ATP from ADP in the presence of a proton or sodium gradient. F-type ATPases consist of two structural domains, F(1) containing the extramembraneous catalytic core and F(0) containing the membrane proton channel, linked together by a central stalk and a peripheral stalk. During catalysis, ATP synthesis in the catalytic domain of F(1) is coupled via a rotary mechanism of the central stalk subunits to proton translocation. In terms of biological role, key component of the F(0) channel; it plays a direct role in translocation across the membrane. A homomeric c-ring of between 10-14 subunits forms the central stalk rotor element with the F(1) delta and epsilon subunits. The sequence is that of ATP synthase subunit c from Rickettsia akari (strain Hartford).